The chain runs to 150 residues: uncharacterized protein (150 aa).

A disordered region spans residues 49–88; it reads KEWAENASTDEIDDFLTHDDETERDADPSSGSGPELMNKA. Residues 63–75 are compositionally biased toward basic and acidic residues; that stretch reads FLTHDDETERDAD.

This is an uncharacterized protein from Bacillus subtilis (strain 168).